The primary structure comprises 178 residues: ATP-dependent protease subunit HslV (178 aa).

Thr5 is a catalytic residue. The Na(+) site is built by Gly161, Cys164, and Thr167.

This sequence belongs to the peptidase T1B family. HslV subfamily. In terms of assembly, a double ring-shaped homohexamer of HslV is capped on each side by a ring-shaped HslU homohexamer. The assembly of the HslU/HslV complex is dependent on binding of ATP.

It localises to the cytoplasm. The catalysed reaction is ATP-dependent cleavage of peptide bonds with broad specificity.. With respect to regulation, allosterically activated by HslU binding. Its function is as follows. Protease subunit of a proteasome-like degradation complex believed to be a general protein degrading machinery. This Aliarcobacter butzleri (strain RM4018) (Arcobacter butzleri) protein is ATP-dependent protease subunit HslV.